Consider the following 288-residue polypeptide: Energy-coupling factor transporter ATP-binding protein EcfA2 (288 aa).

An ABC transporter domain is found at 3–246 (IKLEQLGYCY…PDALVDLGLS (244 aa)). 40–47 (GHTGSGKS) is an ATP binding site.

The protein belongs to the ABC transporter superfamily. Energy-coupling factor EcfA family. In terms of assembly, forms a stable energy-coupling factor (ECF) transporter complex composed of 2 membrane-embedded substrate-binding proteins (S component), 2 ATP-binding proteins (A component) and 2 transmembrane proteins (T component).

It localises to the cell membrane. Functionally, ATP-binding (A) component of a common energy-coupling factor (ECF) ABC-transporter complex. Unlike classic ABC transporters this ECF transporter provides the energy necessary to transport a number of different substrates. The sequence is that of Energy-coupling factor transporter ATP-binding protein EcfA2 from Listeria welshimeri serovar 6b (strain ATCC 35897 / DSM 20650 / CCUG 15529 / CIP 8149 / NCTC 11857 / SLCC 5334 / V8).